A 264-amino-acid polypeptide reads, in one-letter code: Hydroxyethylthiazole kinase (264 aa).

Met-52 contributes to the substrate binding site. The ATP site is built by Arg-127 and Thr-173. Substrate is bound at residue Gly-200.

The protein belongs to the Thz kinase family. The cofactor is Mg(2+).

It catalyses the reaction 5-(2-hydroxyethyl)-4-methylthiazole + ATP = 4-methyl-5-(2-phosphooxyethyl)-thiazole + ADP + H(+). It functions in the pathway cofactor biosynthesis; thiamine diphosphate biosynthesis; 4-methyl-5-(2-phosphoethyl)-thiazole from 5-(2-hydroxyethyl)-4-methylthiazole: step 1/1. Catalyzes the phosphorylation of the hydroxyl group of 4-methyl-5-beta-hydroxyethylthiazole (THZ). The protein is Hydroxyethylthiazole kinase of Serratia proteamaculans (strain 568).